Reading from the N-terminus, the 477-residue chain is Transmembrane and coiled-coil domain protein 3 (477 aa).

The segment at methionine 1–lysine 24 is disordered. Serine 46 bears the Phosphoserine mark. Coiled coils occupy residues lysine 63 to lysine 83 and lysine 112 to threonine 149. Residues alanine 234–threonine 280 are disordered. Phosphoserine is present on serine 253. A compositionally biased stretch (polar residues) spans serine 258–threonine 280. A coiled-coil region spans residues glutamine 284 to glutamine 398. Helical transmembrane passes span valine 409–valine 429 and phenylalanine 450–isoleucine 470.

It belongs to the TEX28 family. As to quaternary structure, may form homodimers and heterodimers with TMCC2 or TMCC3 via the coiled-coil domains. Interacts with ribosomal proteins RPL4 and RPS6.

Its subcellular location is the endoplasmic reticulum membrane. This is Transmembrane and coiled-coil domain protein 3 from Mus musculus (Mouse).